A 342-amino-acid chain; its full sequence is MTESVTISLDAMGGDHGPDVVAPAALAALARNPALRLILVGQAEPVRQALQRHGGQESERLWVHPASEVVAMDEPPSQALRTKKDSSMRVSIQLVKQGEADASISAGNTGALMATARYVLKTLPGIDRPAIMSTIPTKGGYAHMLDLGANVDCTAEHLFQFAVMGSVCAEAIDGVAQPRVGLLNIGEEEIKGNDQVKRACQMLTDSPLNYVGYVEGDGIFKGLADVVVCDGFVGNVALKSSEGVAGLIAHYLRAEFQRNLFTRLAGLIALPVLRSLRGRIDPRQYNGASLLGLRGIVLKSHGGADAFAFGRAIETAVLEVRKGVPRMIDQRLESLLAAKESP.

Belongs to the PlsX family. As to quaternary structure, homodimer. Probably interacts with PlsY.

The protein localises to the cytoplasm. It catalyses the reaction a fatty acyl-[ACP] + phosphate = an acyl phosphate + holo-[ACP]. It participates in lipid metabolism; phospholipid metabolism. Functionally, catalyzes the reversible formation of acyl-phosphate (acyl-PO(4)) from acyl-[acyl-carrier-protein] (acyl-ACP). This enzyme utilizes acyl-ACP as fatty acyl donor, but not acyl-CoA. This is Phosphate acyltransferase from Alkalilimnicola ehrlichii (strain ATCC BAA-1101 / DSM 17681 / MLHE-1).